A 982-amino-acid chain; its full sequence is MEELSKQPPPPPLTQPPPPSSSVSIEEPLPNGKGGGAVVVNSIAKLPEEELLGSVTMHNCPGTRASARVIQKMKQDQTRPMTPPPSEREPNKKEEKAAQKTPSQLKTGSGKTTWTNVERNCFFDALNEFGKDFEAVANCINAKLKRRNANSDYSFKTKDQVRQHYYQTHHKICKYVRFSEELKKPAQELYTLINYGEMRRKLQFLTEKHFMKLKQLVYQGQITVRCKGKNIRIKTPSCKALRRLNQLDDSLEDIRLPSKVEVLVTPANMEAFGRVQSLAQNPRGRIIVPLHKKLISFIKTFEYKWRSANQRLHEEKSAYFSSSLPSAASNNNNNNNETEPLQPSVASLDPSMCFQPRPGVAIHRPLLSITAYLSSISICLTAYEERMGFKVRSETLGNLAGMSVAANKRLRTESGSEKRSPETKKPKSSASPPLEKSLDDGPLEGNLMKMENSSGDELGEEIHEFLGDILEAMQHPQAATIPALSATTGDTTNVAVALETSHDPVQQAYPANADLSNAMATSVLQTSCAAAPAPSTPVTGSLAAPSVARSKRKEAKEAAAAAQARNFKPLLSDDILKRIRKGWTQANAADITIGDLYVVFGQDSKLELEYYWCEVDSSTAMASSILTINTVTPSSSSVGTQTGSAASNANQTGASSNCYVSASSNSSTSSTSLPYNPNDCDSVERVRAVTTSSVSNKLKHLLLVANLSERVRKRQCNCGHTCDRKRDLMTKAQQLAEATATGGVGGMVEGNFRTPMLPVRRPISNIDPVRQLSALTRQKISRQVLVQRRLLPPTSAGDRPYDLLSVRQLHSGLFEPIDRVDGTSSAGISTSGSKPDCSMNAMTASQDQEPGDQGALEFLNDEATQVSARDMPNLDICVATNRTDVSSSLNEAAQDGSTTQSFFQGSMSPMHLLRDSTSNARWLEDNINDFSLTSLLGHLDEIDATRDILDPSSSMSVISESSVDFRHKFQEIAALLQQQEKD.

Disordered regions lie at residues 1 to 37, 71 to 111, 323 to 349, 407 to 456, and 822 to 851; these read MEELSKQPPPPPLTQPPPPSSSVSIEEPLPNGKGGGA, QKMK…GSGK, SLPSAASNNNNNNNETEPLQPSVASLD, NKRL…SSGD, and GTSSAGISTSGSKPDCSMNAMTASQDQEPG. Pro residues predominate over residues 7 to 20; that stretch reads QPPPPPLTQPPPPS. The segment covering 21 to 30 has biased composition (low complexity); it reads SSVSIEEPLP. A compositionally biased stretch (basic and acidic residues) spans 86–98; that stretch reads SEREPNKKEEKAA. Over residues 100–111 the composition is skewed to polar residues; that stretch reads KTPSQLKTGSGK. The SANT domain maps to 109-173; sequence SGKTTWTNVE…HYYQTHHKIC (65 aa). Residues 410-425 are compositionally biased toward basic and acidic residues; the sequence is LRTESGSEKRSPETKK. Phosphoserine occurs at positions 431 and 437. Residues 822-833 are compositionally biased toward low complexity; it reads GTSSAGISTSGS.

This sequence belongs to the cramped family. Ubiquitously expressed throughout embryonic development. High expression is detected in CNS and gonads.

It localises to the nucleus. Polycomb group (Pc-G) genes are needed to maintain expression patterns of the homeotic selector genes of the Antennapedia (Antp-C) and Bithorax (Bx-C) complexes, and hence for the maintenance of segmental determination. Can act as a modifier of position effect variegation (PEV). The sequence is that of Protein cramped (crm) from Drosophila melanogaster (Fruit fly).